Consider the following 500-residue polypeptide: Trans-cinnamate 4-monooxygenase (500 aa).

A helical transmembrane segment spans residues 3 to 23 (ALLVEKVLLGLFVAAVLALVV). (E)-cinnamate contacts are provided by residues 213-218 (RSRLSQ) and alanine 302. Residue cysteine 442 participates in heme binding.

The protein belongs to the cytochrome P450 family. Heme serves as cofactor. In terms of tissue distribution, expressed in roots and leaves.

It is found in the membrane. It carries out the reaction (E)-cinnamate + reduced [NADPH--hemoprotein reductase] + O2 = (E)-4-coumarate + oxidized [NADPH--hemoprotein reductase] + H2O + H(+). The protein operates within phenylpropanoid metabolism; trans-4-coumarate biosynthesis; trans-4-coumarate from trans-cinnamate: step 1/1. Its function is as follows. Catalyzes the first oxidative step of the phenylpropanoid pathway in higher plants by transforming trans-cinnamate into p-coumarate. The compounds formed by this pathway are essential components for lignification, pollination, and defense against ultraviolet light, predators and pathogens. The protein is Trans-cinnamate 4-monooxygenase of Oryza sativa subsp. japonica (Rice).